Here is a 69-residue protein sequence, read N- to C-terminus: DNA-directed RNA polymerase subunit epsilon (69 aa).

The protein belongs to the RNA polymerase subunit epsilon family. In terms of assembly, RNAP is composed of a core of 2 alpha, a beta and a beta' subunit. The core is associated with a delta subunit, and at least one of epsilon or omega. When a sigma factor is associated with the core the holoenzyme is formed, which can initiate transcription.

The enzyme catalyses RNA(n) + a ribonucleoside 5'-triphosphate = RNA(n+1) + diphosphate. A non-essential component of RNA polymerase (RNAP). This chain is DNA-directed RNA polymerase subunit epsilon, found in Listeria monocytogenes serotype 4b (strain CLIP80459).